A 39-amino-acid polypeptide reads, in one-letter code: Photosystem II reaction center protein L (39 aa).

The helical transmembrane segment at 18-38 threads the bilayer; that stretch reads SLYLGLLLVAVLGILFSSYFF.

The protein belongs to the PsbL family. As to quaternary structure, PSII is composed of 1 copy each of membrane proteins PsbA, PsbB, PsbC, PsbD, PsbE, PsbF, PsbH, PsbI, PsbJ, PsbK, PsbL, PsbM, PsbT, PsbX, PsbY, PsbZ, Psb30/Ycf12, peripheral proteins PsbO, CyanoQ (PsbQ), PsbU, PsbV and a large number of cofactors. It forms dimeric complexes.

The protein localises to the cellular thylakoid membrane. One of the components of the core complex of photosystem II (PSII). PSII is a light-driven water:plastoquinone oxidoreductase that uses light energy to abstract electrons from H(2)O, generating O(2) and a proton gradient subsequently used for ATP formation. It consists of a core antenna complex that captures photons, and an electron transfer chain that converts photonic excitation into a charge separation. This subunit is found at the monomer-monomer interface and is required for correct PSII assembly and/or dimerization. The polypeptide is Photosystem II reaction center protein L (Rippkaea orientalis (strain PCC 8801 / RF-1) (Cyanothece sp. (strain PCC 8801))).